A 399-amino-acid chain; its full sequence is Cell division protein DivIB (399 aa).

Disordered stretches follow at residues 1–23 and 35–119; these read MSKD…SEWQ and EEEA…ATKE. Residues 1 to 133 lie on the Cytoplasmic side of the membrane; the sequence is MSKDKKNEDK…AKIPGIHILR (133 aa). Composition is skewed to basic and acidic residues over residues 35–65 and 75–119; these read EEEA…KQDQ and ESAK…ATKE. The chain crosses the membrane as a helical span at residues 134 to 154; sequence AFTILFPSLLLLFVSAYLLSP. Topologically, residues 155 to 399 are extracellular; sequence YATMKDIRVE…NQTTQRSSRR (245 aa). The POTRA domain maps to 156-226; it reads ATMKDIRVEG…TKFTIKVKEY (71 aa). A compositionally biased stretch (basic and acidic residues) spans 364–388; that stretch reads KAKQEAKEAEKKQEEEQKKQEEESN. Positions 364–399 are disordered; sequence KAKQEAKEAEKKQEEEQKKQEEESNRNQTTQRSSRR. Polar residues predominate over residues 389 to 399; it reads RNQTTQRSSRR.

It belongs to the FtsQ/DivIB family. DivIB subfamily.

The protein resides in the cell membrane. In terms of biological role, cell division protein that may be involved in stabilizing or promoting the assembly of the division complex. The polypeptide is Cell division protein DivIB (Streptococcus pneumoniae serotype 4 (strain ATCC BAA-334 / TIGR4)).